The sequence spans 271 residues: Phosphonoacetaldehyde hydrolase (271 aa).

The Nucleophile role is filled by aspartate 12. Mg(2+)-binding residues include aspartate 12 and alanine 14. Lysine 54 functions as the Schiff-base intermediate with substrate in the catalytic mechanism. A Mg(2+)-binding site is contributed by aspartate 188.

The protein belongs to the HAD-like hydrolase superfamily. PhnX family. As to quaternary structure, homodimer. Mg(2+) is required as a cofactor.

The catalysed reaction is phosphonoacetaldehyde + H2O = acetaldehyde + phosphate + H(+). In terms of biological role, involved in phosphonate degradation. This is Phosphonoacetaldehyde hydrolase from Vibrio vulnificus (strain CMCP6).